The following is a 375-amino-acid chain: Peptide chain release factor 1 (375 aa).

The residue at position 237 (Gln237) is an N5-methylglutamine. Residues 289–299 are compositionally biased toward basic and acidic residues; sequence AAREAQERQER. The tract at residues 289–326 is disordered; it reads AAREAQERQERASQVGSGDRSEKIRTYNYPQNRVTDHR.

Belongs to the prokaryotic/mitochondrial release factor family. In terms of processing, methylated by PrmC. Methylation increases the termination efficiency of RF1.

The protein resides in the cytoplasm. Peptide chain release factor 1 directs the termination of translation in response to the peptide chain termination codons UAG and UAA. This Deinococcus radiodurans (strain ATCC 13939 / DSM 20539 / JCM 16871 / CCUG 27074 / LMG 4051 / NBRC 15346 / NCIMB 9279 / VKM B-1422 / R1) protein is Peptide chain release factor 1 (prfA).